A 106-amino-acid chain; its full sequence is Large ribosomal subunit protein eL36 (106 aa).

Basic and acidic residues predominate over residues 75–93 (VRQEKVGHSQESKEEERGD). Residues 75–106 (VRQEKVGHSQESKEEERGDVQCSPPDEGWWWY) form a disordered region.

The protein belongs to the eukaryotic ribosomal protein eL36 family.

This Daucus carota (Wild carrot) protein is Large ribosomal subunit protein eL36 (RPL36).